The chain runs to 780 residues: Myosin heavy chain kinase C (780 aa).

An Alpha-type protein kinase domain is found at 40-243 (IGDDLKPKWT…VCDFLKLKPI (204 aa)). The segment at 310 to 495 (RIRAQQQQKS…MEQTPDRSEF (186 aa)) is disordered. Residues 337–350 (QQSPSSPTSKPVPQ) show a composition bias toward low complexity. Polar residues predominate over residues 353-376 (KTPSQSNVVNKSPVSPPKENSNVK). Low complexity predominate over residues 380–436 (DNINNNNSSISSNNDNSNNNNNNNDNINNSSNSSSVNSNSSSVSSSSSSSSSSSSSS). The segment covering 437–450 (TTNAAPISIQVSRN) has biased composition (polar residues). Residues 458–488 (IQPSSAAASASSTSSSNVPTPESTSTSSMEQ) are compositionally biased toward low complexity. 6 WD repeats span residues 507–546 (DTVR…HVTN), 549–589 (AHGK…TIKE), 591–628 (KESN…CVKT), 631–668 (GHTR…ILTN), 671–708 (GHEG…CVNT), and 748–780 (NTRS…WDKM).

It belongs to the protein kinase superfamily. Alpha-type protein kinase family. ALPK subfamily. Interacts with myosin II heavy chain (mhcA). In terms of processing, autophosphorylated in vitro.

It localises to the cytoplasm. Its subcellular location is the cell cortex. It is found in the membrane. The protein resides in the cleavage furrow. The enzyme catalyses L-threonyl-[myosin heavy-chain] + ATP = O-phospho-L-threonyl-[myosin heavy-chain] + ADP + H(+). Functionally, phosphorylates threonine at 'Thr-1823', 'Thr-1833' and 'Thr-2029' in the C-terminal tail region of myosin II heavy chain (mhcA). This phosphorylation is critical in actin-activated ATPase activity of the myosin and regulating the assembly and disassembly of myosin II filament. In vitro, catalytic domain phosphorylates mhcA, myelin basic protein, myosin regulatory light chain, casein and caldesmon. Drives the disassembly of myosin II filaments for efficient cytokinesis and recycling of myosin II that occurs during late cytokinesis. Can be activated in vitro by autophosphorylation. This chain is Myosin heavy chain kinase C (mhkC), found in Dictyostelium discoideum (Social amoeba).